A 172-amino-acid polypeptide reads, in one-letter code: Protein GrpE (172 aa).

Positions 1–23 are disordered; that stretch reads MNQDHPECDSEELTQNSPETDPL.

Belongs to the GrpE family. Homodimer.

It localises to the cytoplasm. In terms of biological role, participates actively in the response to hyperosmotic and heat shock by preventing the aggregation of stress-denatured proteins, in association with DnaK and GrpE. It is the nucleotide exchange factor for DnaK and may function as a thermosensor. Unfolded proteins bind initially to DnaJ; upon interaction with the DnaJ-bound protein, DnaK hydrolyzes its bound ATP, resulting in the formation of a stable complex. GrpE releases ADP from DnaK; ATP binding to DnaK triggers the release of the substrate protein, thus completing the reaction cycle. Several rounds of ATP-dependent interactions between DnaJ, DnaK and GrpE are required for fully efficient folding. The chain is Protein GrpE from Xylella fastidiosa (strain 9a5c).